The primary structure comprises 187 residues: DNA-3-methyladenine glycosylase 1 (187 aa).

Residues cysteine 4, histidine 17, histidine 175, and cysteine 179 each contribute to the Zn(2+) site.

It carries out the reaction Hydrolysis of alkylated DNA, releasing 3-methyladenine.. Its activity is regulated as follows. Activity is controlled by product inhibition. Its function is as follows. Hydrolysis of the deoxyribose N-glycosidic bond to excise 3-methyladenine from the damaged DNA polymer formed by alkylation lesions. This Escherichia coli (strain K12) protein is DNA-3-methyladenine glycosylase 1.